We begin with the raw amino-acid sequence, 439 residues long: RNA polymerase II-associated protein RBA50 (439 aa).

Disordered stretches follow at residues 1 to 35 and 49 to 79; these read MDLL…GFPE and LREK…SEAK. Over residues 15–30 the composition is skewed to polar residues; that stretch reads SVESNDNGTLSTNNCG.

The protein belongs to the RPAP1 family.

It localises to the cytoplasm. Its function is as follows. Forms an interface between the RNA polymerase II enzyme and chaperone/scaffolding proteins, suggesting that it is required to connect RNA polymerase II to regulators of protein complex formation. The chain is RNA polymerase II-associated protein RBA50 (RBA50) from Saccharomyces cerevisiae (strain ATCC 204508 / S288c) (Baker's yeast).